A 170-amino-acid polypeptide reads, in one-letter code: Probable phospholipid hydroperoxide glutathione peroxidase (170 aa).

C44 is a catalytic residue.

The protein belongs to the glutathione peroxidase family.

The protein resides in the cytoplasm. It catalyses the reaction a hydroperoxy polyunsaturated fatty acid + 2 glutathione = a hydroxy polyunsaturated fatty acid + glutathione disulfide + H2O. Its function is as follows. Protects cells and enzymes from oxidative damage, by catalyzing the reduction of hydrogen peroxide, lipid peroxides and organic hydroperoxide, by glutathione. The chain is Probable phospholipid hydroperoxide glutathione peroxidase (GPXMC1) from Mesembryanthemum crystallinum (Common ice plant).